The primary structure comprises 166 residues: Signal peptidase complex catalytic subunit SEC11 (166 aa).

The Cytoplasmic portion of the chain corresponds to 1–9; that stretch reads MNIRQQLTQ. Residues 10–30 form a helical; Signal-anchor for type II membrane protein membrane-spanning segment; that stretch reads FLSLAYVFTSAFVIWKSLGII. The Lumenal portion of the chain corresponds to 31–166; sequence TNSHSPIVVV…MCISTLLTNE (136 aa). Residues S44, H83, and D108 each act as charge relay system in the active site. A C-terminal short (CTS) helix region spans residues 152-163; that stretch reads GMLGLMCISTLL.

Belongs to the peptidase S26B family. As to quaternary structure, component of the signal peptidase complex (SPC) composed of a catalytic subunit SEC11 and three accessory subunits SPC1, SPC2 and SPC3. The complex induces a local thinning of the ER membrane which is used to measure the length of the signal peptide (SP) h-region of protein substrates. This ensures the selectivity of the complex towards h-regions shorter than 18-20 amino acids. SPC associates with the translocon complex.

The protein resides in the endoplasmic reticulum membrane. It carries out the reaction Cleavage of hydrophobic, N-terminal signal or leader sequences from secreted and periplasmic proteins.. Catalytic component of the signal peptidase complex (SPC) which catalyzes the cleavage of N-terminal signal sequences from nascent proteins as they are translocated into the lumen of the endoplasmic reticulum. Specifically cleaves N-terminal signal peptides that contain a hydrophobic alpha-helix (h-region) shorter than 18-20 amino acids. This is Signal peptidase complex catalytic subunit SEC11 (SEC11) from Scheffersomyces stipitis (strain ATCC 58785 / CBS 6054 / NBRC 10063 / NRRL Y-11545) (Yeast).